Reading from the N-terminus, the 82-residue chain is MILKYPYATEKASMIVERDGQLQFIVDRKASKGQIKVAIEKMFDQPVTRVRTLMNNRGEKKAMVSFSNPKAAEEILSRLGIM.

Belongs to the universal ribosomal protein uL23 family. In terms of assembly, part of the 50S ribosomal subunit. Contacts protein L29.

Binds to 23S rRNA. One of the proteins that surrounds the polypeptide exit tunnel on the outside of the ribosome. The polypeptide is Large ribosomal subunit protein uL23 (Methanospirillum hungatei JF-1 (strain ATCC 27890 / DSM 864 / NBRC 100397 / JF-1)).